The primary structure comprises 518 residues: Cytochrome P450 82E3 (518 aa).

A helical transmembrane segment spans residues 2–22; the sequence is VFPVEAIVGLVTFTFLFYFLW. Lys254 participates in a covalent cross-link: Glycyl lysine isopeptide (Lys-Gly) (interchain with G-Cter in ubiquitin). Cys458 contributes to the heme binding site.

It belongs to the cytochrome P450 family. CYP82E2 subfamily. Requires heme as cofactor. Expressed at low levels in green leaves.

The protein localises to the membrane. It functions in the pathway alkaloid biosynthesis; nicotine biosynthesis. Functionally, no nicotine N-demethylase activity. In Nicotiana tabacum (Common tobacco), this protein is Cytochrome P450 82E3.